Reading from the N-terminus, the 57-residue chain is Lantibiotic nisin-A (57 aa).

A propeptide spanning residues 1–23 is cleaved from the precursor; that stretch reads MSTKDFNLDLVSVSKKDSGASPR. Threonine 25 carries the (Z)-2,3-didehydrobutyrine modification. The lanthionine (Ser-Cys) cross-link spans 26-30; the sequence is SISLC. 2,3-didehydroalanine (Ser) is present on serine 28. 4 cross-links (beta-methyllanthionine (Thr-Cys)) span residues 31-34, 36-42, 46-49, and 48-51; these read TPGC, TGALMGC, TATC, and TCHC. Serine 56 carries the 2,3-didehydroalanine (Ser) modification.

This sequence belongs to the type A lantibiotic family. In terms of processing, maturation of lantibiotics involves the enzymatic conversion of Thr, and Ser into dehydrated AA and the formation of thioether bonds with cysteine. This is followed by membrane translocation and cleavage of the modified precursor. Post-translationally, the structure of the 2,3-didehydrobutyrine is not discussed in PubMed:8454055. However, in Fig. 1 the residue is diagrammed as the Z-isomer.

Its function is as follows. Lanthionine-containing peptide antibiotic (lantibiotic) active on Gram-positive bacteria. The bactericidal activity of lantibiotics is based on depolarization of energized bacterial cytoplasmic membranes, initiated by the formation of aqueous transmembrane pores. This chain is Lantibiotic nisin-A (spaN), found in Lactococcus lactis subsp. lactis (Streptococcus lactis).